Consider the following 345-residue polypeptide: S-adenosylmethionine:tRNA ribosyltransferase-isomerase (345 aa).

This sequence belongs to the QueA family. In terms of assembly, monomer.

It is found in the cytoplasm. It catalyses the reaction 7-aminomethyl-7-carbaguanosine(34) in tRNA + S-adenosyl-L-methionine = epoxyqueuosine(34) in tRNA + adenine + L-methionine + 2 H(+). It participates in tRNA modification; tRNA-queuosine biosynthesis. Functionally, transfers and isomerizes the ribose moiety from AdoMet to the 7-aminomethyl group of 7-deazaguanine (preQ1-tRNA) to give epoxyqueuosine (oQ-tRNA). The chain is S-adenosylmethionine:tRNA ribosyltransferase-isomerase from Azoarcus sp. (strain BH72).